The sequence spans 463 residues: NADH-ubiquinone oxidoreductase chain 4 (463 aa).

The next 13 helical transmembrane spans lie at 24–44 (LWAGAIFQSALLSLLSLIVLN), 62–82 (TISAPLIILSCWLAPIALIAS), 98–118 (IIMIIVITGALIITFSSLELI), 119–139 (LFYIVVETTLIPTLILITRWG), 151–171 (FMFYTLFGSLPLLIAIIAIYI), 198–218 (WALSINCFFNNLPVYGFHLWL), 232–252 (ILAAILLKIGGYGLMRLIALF), 260–280 (LSLALIVFCTWGALITSVICV), 285–305 (LKALIAYSSVGHMSIVAAAIF), 310–330 (WGMNGALMLMVAHGLVSSALF), 353–373 (LLLPLSTLWWLLMCAANLGLP), 404–424 (VFGAIYSLMIFQLSQQGTPFT), and 442–462 (LHILPLILIMINPFSALIAWL).

The protein belongs to the complex I subunit 4 family.

It is found in the mitochondrion membrane. It catalyses the reaction a ubiquinone + NADH + 5 H(+)(in) = a ubiquinol + NAD(+) + 4 H(+)(out). Functionally, core subunit of the mitochondrial membrane respiratory chain NADH dehydrogenase (Complex I) that is believed to belong to the minimal assembly required for catalysis. Complex I functions in the transfer of electrons from NADH to the respiratory chain. The immediate electron acceptor for the enzyme is believed to be ubiquinone. The sequence is that of NADH-ubiquinone oxidoreductase chain 4 (ND4) from Strongylocentrotus purpuratus (Purple sea urchin).